The primary structure comprises 293 residues: Pyridoxal 5'-phosphate synthase subunit PdxS (293 aa).

Asp23 provides a ligand contact to D-ribose 5-phosphate. The Schiff-base intermediate with D-ribose 5-phosphate role is filled by Lys80. Gly152 is a binding site for D-ribose 5-phosphate. Position 164 (Arg164) interacts with D-glyceraldehyde 3-phosphate. D-ribose 5-phosphate contacts are provided by residues Gly213 and 234 to 235 (GS).

It belongs to the PdxS/SNZ family. In the presence of PdxT, forms a dodecamer of heterodimers.

The enzyme catalyses aldehydo-D-ribose 5-phosphate + D-glyceraldehyde 3-phosphate + L-glutamine = pyridoxal 5'-phosphate + L-glutamate + phosphate + 3 H2O + H(+). Its pathway is cofactor biosynthesis; pyridoxal 5'-phosphate biosynthesis. Catalyzes the formation of pyridoxal 5'-phosphate from ribose 5-phosphate (RBP), glyceraldehyde 3-phosphate (G3P) and ammonia. The ammonia is provided by the PdxT subunit. Can also use ribulose 5-phosphate and dihydroxyacetone phosphate as substrates, resulting from enzyme-catalyzed isomerization of RBP and G3P, respectively. The polypeptide is Pyridoxal 5'-phosphate synthase subunit PdxS (Dehalococcoides mccartyi (strain ATCC BAA-2100 / JCM 16839 / KCTC 5957 / BAV1)).